The following is a 105-amino-acid chain: POU domain, class 3, transcription factor 3 (105 aa).

In terms of domain architecture, POU-specific spans 1-49 (QADVGLALGTLYGNVFSQTTICRFEALQLSFKNMCKLKPLLNKWLEEAD). Positions 67 to 105 (KRKKRTSIEVSVKGALESHFLKCPKPAAQEITTLADSLQ) form a DNA-binding region, homeobox.

It belongs to the POU transcription factor family. Class-3 subfamily.

It is found in the nucleus. The protein is POU domain, class 3, transcription factor 3 (pou3f3) of Xenopus laevis (African clawed frog).